We begin with the raw amino-acid sequence, 241 residues long: Ubiquinone biosynthesis O-methyltransferase (241 aa).

Positions 46, 66, 87, and 131 each coordinate S-adenosyl-L-methionine.

This sequence belongs to the methyltransferase superfamily. UbiG/COQ3 family.

The catalysed reaction is a 3-demethylubiquinol + S-adenosyl-L-methionine = a ubiquinol + S-adenosyl-L-homocysteine + H(+). It catalyses the reaction a 3-(all-trans-polyprenyl)benzene-1,2-diol + S-adenosyl-L-methionine = a 2-methoxy-6-(all-trans-polyprenyl)phenol + S-adenosyl-L-homocysteine + H(+). Its pathway is cofactor biosynthesis; ubiquinone biosynthesis. Its function is as follows. O-methyltransferase that catalyzes the 2 O-methylation steps in the ubiquinone biosynthetic pathway. This chain is Ubiquinone biosynthesis O-methyltransferase, found in Bordetella pertussis (strain Tohama I / ATCC BAA-589 / NCTC 13251).